The primary structure comprises 597 residues: TOX high mobility group box family member 4 (597 aa).

2 disordered regions span residues 160-224 (GAIL…EPQK) and 520-546 (VQEESPPPQMDVELVSSSPPPSLSPQP). A compositionally biased stretch (basic residues) spans 207–217 (KPKTPKKKKKK). The Nuclear localization signal motif lies at 212 to 217 (KKKKKK). Residues 222–290 (PQKPLSAYAL…EYLKALALYK (69 aa)) constitute a DNA-binding region (HMG box).

In terms of assembly, component of the PNUTS-PP1 phosphatase complex.

The protein localises to the nucleus. It localises to the chromosome. Its function is as follows. Transcription factor that modulates cell fate reprogramming from the somatic state to the pluripotent and neuronal fate. Also acts as a regulatory component of protein phosphatase 1 (PP1) complexes. Component of the PNUTS-PP1 protein phosphatase complex, a PP1 complex that regulates RNA polymerase II transcription pause-release. PNUTS-PP1 also plays a role in the control of chromatin structure and cell cycle progression during the transition from mitosis into interphase. The chain is TOX high mobility group box family member 4 (tox4) from Xenopus tropicalis (Western clawed frog).